An 876-amino-acid chain; its full sequence is Probable inactive ATP-dependent zinc metalloprotease FTSHI 2, chloroplastic (876 aa).

A disordered region spans residues 1–20 (MACRFPLHSSSPSQFLSPEN). A chloroplast-targeting transit peptide spans 1–32 (MACRFPLHSSSPSQFLSPENRQRLPRNYPSIS). Positions 8–19 (HSSSPSQFLSPE) are enriched in polar residues. A helical transmembrane segment spans residues 59–79 (LLAIPITLTIISASLAKPSFA). The segment at 256–276 (TMKAQKKQQERKKRKAVRKKK) is disordered. Over residues 258–275 (KAQKKQQERKKRKAVRKK) the composition is skewed to basic residues. The helical transmembrane segment at 304–324 (VATALGLVFFYIFYRVVVLNY) threads the bilayer. The tract at residues 350-370 (ELEREMEGIEEEDEEVEEGTG) is disordered. Acidic residues predominate over residues 357–368 (GIEEEDEEVEEG). 450-457 (GPPGVGKT) is a binding site for ATP.

In the N-terminal section; belongs to the AAA ATPase family. This sequence in the C-terminal section; belongs to the peptidase M41 family. In terms of assembly, homooligomer. Interacts with FtsHi4.

It localises to the plastid. The protein localises to the chloroplast membrane. Required for plastid development during embryogenesis. Might be involved in chaperone functions or play a structural role in the thylakoid FtsH complex. This is Probable inactive ATP-dependent zinc metalloprotease FTSHI 2, chloroplastic from Arabidopsis thaliana (Mouse-ear cress).